The chain runs to 500 residues: Putative beta-lactamase-like 1 (500 aa).

It belongs to the beta-lactamase family.

The protein is Putative beta-lactamase-like 1 (LACTBL1) of Homo sapiens (Human).